The following is a 377-amino-acid chain: MTDNSHTRVVVGMSGGVDSSVTALLLKQQGYDVVGVFMKNWDDTDENGVCTATEDYKDVAKVATQIGIPYYSVNFEKEYWDRVFTYFIDEFKKGRTPNPDVICNKEIKFKAFIEYANQLGADYVATGHYADLKRDEAGNMHLMRAKDQTKDQTYFLSQLDHAQLDKVLFPLAGYTKKEVRQLAKDAGLVVADKKDSVGICFIGEDGHFREFLSQYLPAQQGEMQTVDGKVVGTHAGLMYYTIGQRKGLGLGGTKENNDPWFVIGKDITKNVLYVGQGYENEHLYATHMEASDIHWVDDVVSRYGMEFHCTAKFRYRQKDEGVTVKLSDDGQMVTVTSDDPARAITPGQAVVFYDGDECLGSAIIDRAYNQERQLQYV.

ATP is bound by residues 12 to 19 (GMSGGVDS) and Met38. The interval 98 to 100 (NPD) is interaction with target base in tRNA. The active-site Nucleophile is the Cys103. An intrachain disulfide couples Cys103 to Cys200. Gly127 provides a ligand contact to ATP. The tract at residues 150–152 (KDQ) is interaction with tRNA. Catalysis depends on Cys200, which acts as the Cysteine persulfide intermediate. The tract at residues 314-315 (RY) is interaction with tRNA.

The protein belongs to the MnmA/TRMU family.

It localises to the cytoplasm. The enzyme catalyses S-sulfanyl-L-cysteinyl-[protein] + uridine(34) in tRNA + AH2 + ATP = 2-thiouridine(34) in tRNA + L-cysteinyl-[protein] + A + AMP + diphosphate + H(+). In terms of biological role, catalyzes the 2-thiolation of uridine at the wobble position (U34) of tRNA, leading to the formation of s(2)U34. The chain is tRNA-specific 2-thiouridylase MnmA from Limosilactobacillus fermentum (strain NBRC 3956 / LMG 18251) (Lactobacillus fermentum).